Reading from the N-terminus, the 292-residue chain is Protein PHR1-LIKE 3 (292 aa).

The 61-residue stretch at 34–94 (TDPKPRLRWT…HLQKFRLGRQ (61 aa)) folds into the HTH myb-type domain. The H-T-H motif DNA-binding region spans 65–90 (PKTIMRTMGVKGLTLYHLKSHLQKFR). Positions 137–157 (TEALRAQMEVQRRLHEQLEVQ) form a coiled coil. Residues 150–155 (LHEQLE) carry the LHEQLE motif.

Belongs to the MYB-CC family. As to quaternary structure, homo- and heterodimers. Interacts with PHL2, but not with PHR1.

The protein resides in the nucleus. In terms of biological role, transcriptional activator. Probable component of the central regulatory system controlling transcriptional responses to Pi starvation. Binds in a sequence-specific manner to phosphate starvation-regulated promoters. Required for female gametophyte development and function. This chain is Protein PHR1-LIKE 3, found in Arabidopsis thaliana (Mouse-ear cress).